Here is a 355-residue protein sequence, read N- to C-terminus: F-box protein At1g31080 (355 aa).

The 46-residue stretch at 4 to 49 (GANSASIPNDLILEILSRLPAKSTGRFRCVSKLWGSMLCHSYFTEL) folds into the F-box domain. A compositionally biased stretch (polar residues) spans 306–320 (AGTSRSPPKQSTSTS). A disordered region spans residues 306 to 333 (AGTSRSPPKQSTSTSSREDHEVRTLAHQ). Residues 321-333 (SREDHEVRTLAHQ) are compositionally biased toward basic and acidic residues.

The polypeptide is F-box protein At1g31080 (Arabidopsis thaliana (Mouse-ear cress)).